The chain runs to 150 residues: Nucleoside diphosphate kinase (150 aa).

Lys10, Phe58, Arg86, Thr92, Arg103, and Asn113 together coordinate ATP. His116 serves as the catalytic Pros-phosphohistidine intermediate.

This sequence belongs to the NDK family. As to quaternary structure, homohexamer. Requires Mg(2+) as cofactor.

The enzyme catalyses a 2'-deoxyribonucleoside 5'-diphosphate + ATP = a 2'-deoxyribonucleoside 5'-triphosphate + ADP. It carries out the reaction a ribonucleoside 5'-diphosphate + ATP = a ribonucleoside 5'-triphosphate + ADP. Functionally, major role in the synthesis of nucleoside triphosphates other than ATP. The ATP gamma phosphate is transferred to the NDP beta phosphate via a ping-pong mechanism, using a phosphorylated active-site intermediate. This chain is Nucleoside diphosphate kinase (awd), found in Drosophila yakuba (Fruit fly).